Here is a 114-residue protein sequence, read N- to C-terminus: Histone H3-3 (114 aa).

Residues 1–17 are compositionally biased toward basic residues; it reads NTGGKAPRKHIAHKQAK. A disordered region spans residues 1–32; the sequence is NTGGKAPRKHIAHKQAKKSSAAAATGGVKKPH. A compositionally biased stretch (low complexity) spans 18 to 28; it reads KSSAAAATGGV.

Belongs to the histone H3 family. As to quaternary structure, the nucleosome is a histone octamer containing two molecules each of H2A, H2B, H3 and H4 assembled in one H3-H4 heterotetramer and two H2A-H2B heterodimers. The octamer wraps approximately 147 bp of DNA.

Its subcellular location is the nucleus. The protein resides in the chromosome. Core component of nucleosome. Nucleosomes wrap and compact DNA into chromatin, limiting DNA accessibility to the cellular machineries which require DNA as a template. Histones thereby play a central role in transcription regulation, DNA repair, DNA replication and chromosomal stability. DNA accessibility is regulated via a complex set of post-translational modifications of histones, also called histone code, and nucleosome remodeling. The polypeptide is Histone H3-3 (H3-3) (Stylonychia lemnae (Ciliate)).